Consider the following 367-residue polypeptide: NADH-quinone oxidoreductase subunit D (367 aa).

The protein belongs to the complex I 49 kDa subunit family. NDH-1 is composed of 14 different subunits. Subunits NuoB, C, D, E, F, and G constitute the peripheral sector of the complex.

It localises to the cell membrane. The enzyme catalyses a quinone + NADH + 5 H(+)(in) = a quinol + NAD(+) + 4 H(+)(out). Functionally, NDH-1 shuttles electrons from NADH, via FMN and iron-sulfur (Fe-S) centers, to quinones in the respiratory chain. The immediate electron acceptor for the enzyme in this species is believed to be a menaquinone. Couples the redox reaction to proton translocation (for every two electrons transferred, four hydrogen ions are translocated across the cytoplasmic membrane), and thus conserves the redox energy in a proton gradient. The protein is NADH-quinone oxidoreductase subunit D of Geobacillus kaustophilus (strain HTA426).